Here is a 422-residue protein sequence, read N- to C-terminus: MTKTSSFSAPKGVPDYVPPGSAEFVAVRDALLRAARLAGYGHIELPIFEDTGLFARGVGESTDVVTKEMYTFADRGERSVTLRPEGTAGVMRAVIEHGLDRGQLPVKLVYSGPFFRYERPQAGRYRQLQQVGVEAIGVDDPALDAEVIAIADAGFRSLGLDGFRLELTSLGDDTCRPRYRELLQEFLFGLPLDEETRRRAELNPLRVLDDKRPEVRELLADAPLMIDHLSESAKAHFEQVLGHLDALGVPYVVNPRMVRGLDYYTKTTFEFVHDGLGAQSGIGGGGRYDGLMAQLGGQPLSGIGFGLGVDRTMLALQAEGKSAGDPARCDVFGVPLGEAAKQRMVVLAAQLRAAGVRVDLAYGGRGVKGAMKAADRSGARYTLVLGDRDLAEDTIGVKDMSTGDQRQVPLGEVVGVLRSELG.

This sequence belongs to the class-II aminoacyl-tRNA synthetase family. In terms of assembly, homodimer.

The protein localises to the cytoplasm. It catalyses the reaction tRNA(His) + L-histidine + ATP = L-histidyl-tRNA(His) + AMP + diphosphate + H(+). The protein is Histidine--tRNA ligase of Nocardia farcinica (strain IFM 10152).